Reading from the N-terminus, the 514-residue chain is MSLTEEIKKRRTFAIISHPDAGKTTITEQLLYFGGEIREAGTVKGKKSGTFAKSDWMDIEKQRGISVTSSVMQFDYAGKRVNILDTPGHEDFSEDTYRTLMAVDAAVMVVDSAKGIEAQTKKLFEVVKHRNIPVFTFINKLDRDGREPLELLEELEEVLGIASYPMNWPIGMGRAFEGLYDLHNKRLELYKGDERFASIEDGDQLFANNPFYEQVKEDIELLQEAGNDFSEQAILDGDLTPVFFGSALTNFGVQTFLDTFLEFAPEPHGHKTTEGNVVDPLAKDFSGFVFKIQANMDPKHRDRIAFVRIVSGEFERGMGVNLTRTGKGAKLSNVTQFMAESRENVTNAVAGDIIGVYDTGTYQVGDTLTVGKNKFEFEPLPTFTPEIFMKVSPKNVMKQKSFHKGIEQLVQEGAIQLYKNYQTGEYMLGAVGQLQFEVFKHRMEGEYNAEVVMTPMGKKTVRWISEDDLDQRMSSSRNILAKDRFDQPVFLFENDFALRWFADKYPDVTLEEKM.

The tr-type G domain maps to 8–268 (KKRRTFAIIS…TFLEFAPEPH (261 aa)). GTP-binding positions include 17 to 24 (SHPDAGKT), 85 to 89 (DTPGH), and 139 to 142 (NKLD).

The protein belongs to the TRAFAC class translation factor GTPase superfamily. Classic translation factor GTPase family. PrfC subfamily.

It localises to the cytoplasm. Increases the formation of ribosomal termination complexes and stimulates activities of RF-1 and RF-2. It binds guanine nucleotides and has strong preference for UGA stop codons. It may interact directly with the ribosome. The stimulation of RF-1 and RF-2 is significantly reduced by GTP and GDP, but not by GMP. The protein is Peptide chain release factor 3 of Streptococcus pyogenes serotype M1.